The sequence spans 354 residues: Guanine nucleotide-binding protein subunit alpha-14 (354 aa).

Positions 33–354 (RELKLLLLGT…QLNLREFNLV (322 aa)) constitute a G-alpha domain. The tract at residues 36–49 (KLLLLGTGESGKST) is G1 motif. Residues 41–48 (GTGESGKS), 175–181 (LRVRVPT), 200–204 (DVGGQ), 269–272 (NKKD), and A326 each bind GTP. Positions 48 and 181 each coordinate Mg(2+). Residues 173 to 181 (DVLRVRVPT) are G2 motif. The G3 motif stretch occupies residues 196–205 (FRMVDVGGQR). The segment at 265 to 272 (ILFLNKKD) is G4 motif. The tract at residues 324–329 (TCATDT) is G5 motif.

Belongs to the G-alpha family. G(q) subfamily. G proteins are composed of 3 units; alpha, beta and gamma. The alpha chain contains the guanine nucleotide binding site.

Functionally, guanine nucleotide-binding proteins (G proteins) are involved as modulators or transducers in various transmembrane signaling systems. Acts as an activator of phospholipase C. Mediates responses to trypsin. The sequence is that of Guanine nucleotide-binding protein subunit alpha-14 (gna14) from Xenopus laevis (African clawed frog).